A 785-amino-acid chain; its full sequence is Probable serine protease Ga0098714_109514 (785 aa).

Composition is skewed to basic and acidic residues over residues 470-481 and 491-501; these read LDHGKNGREGGR and DGPEHPNHYAD. Disordered stretches follow at residues 470-503 and 608-629; these read LDHG…ADID and DGDA…EEVS.

This sequence belongs to the peptidase S1 family.

Probably a dedicated protease for substrate gasdermin bGSDM; cleaves the bGSDM precursor, releasing the pore-forming moiety, which integrates into the membrane and triggers cell death. Involved in defense against bacteriophages. Expression of gasdermin bGSDM and this neighboring protease is toxic in E.coli on solid medium. The sequence is that of Probable serine protease Ga0098714_109514 from Bradyrhizobium tropiciagri.